The following is a 27-amino-acid chain: MLMYQTRRTYQNSNNIAVVHLLKPAWR.

The protein is Protein YqiM of Escherichia coli (strain K12).